Reading from the N-terminus, the 294-residue chain is tRNA dimethylallyltransferase (294 aa).

An ATP-binding site is contributed by 9-16 (GATATGKS). 11-16 (TATGKS) is a substrate binding site. The interaction with substrate tRNA stretch occupies residues 34–37 (DSRQ).

The protein belongs to the IPP transferase family. In terms of assembly, monomer. It depends on Mg(2+) as a cofactor.

The enzyme catalyses adenosine(37) in tRNA + dimethylallyl diphosphate = N(6)-dimethylallyladenosine(37) in tRNA + diphosphate. Catalyzes the transfer of a dimethylallyl group onto the adenine at position 37 in tRNAs that read codons beginning with uridine, leading to the formation of N6-(dimethylallyl)adenosine (i(6)A). This is tRNA dimethylallyltransferase from Trichormus variabilis (strain ATCC 29413 / PCC 7937) (Anabaena variabilis).